The primary structure comprises 572 residues: Proline--tRNA ligase (572 aa).

Belongs to the class-II aminoacyl-tRNA synthetase family. ProS type 1 subfamily. As to quaternary structure, homodimer.

The protein localises to the cytoplasm. It catalyses the reaction tRNA(Pro) + L-proline + ATP = L-prolyl-tRNA(Pro) + AMP + diphosphate. Functionally, catalyzes the attachment of proline to tRNA(Pro) in a two-step reaction: proline is first activated by ATP to form Pro-AMP and then transferred to the acceptor end of tRNA(Pro). As ProRS can inadvertently accommodate and process non-cognate amino acids such as alanine and cysteine, to avoid such errors it has two additional distinct editing activities against alanine. One activity is designated as 'pretransfer' editing and involves the tRNA(Pro)-independent hydrolysis of activated Ala-AMP. The other activity is designated 'posttransfer' editing and involves deacylation of mischarged Ala-tRNA(Pro). The misacylated Cys-tRNA(Pro) is not edited by ProRS. This is Proline--tRNA ligase from Pectobacterium carotovorum subsp. carotovorum (strain PC1).